Here is a 264-residue protein sequence, read N- to C-terminus: Thymidylate synthase (264 aa).

DUMP contacts are provided by residues Arg-21 and 126 to 127 (RR). Catalysis depends on Cys-146, which acts as the Nucleophile. Residues 166-169 (RSAD), Asn-177, and 207-209 (HLY) contribute to the dUMP site. (6R)-5,10-methylene-5,6,7,8-tetrahydrofolate is bound at residue Asp-169. Ala-263 contacts (6R)-5,10-methylene-5,6,7,8-tetrahydrofolate.

Belongs to the thymidylate synthase family. Bacterial-type ThyA subfamily. Homodimer.

The protein resides in the cytoplasm. It carries out the reaction dUMP + (6R)-5,10-methylene-5,6,7,8-tetrahydrofolate = 7,8-dihydrofolate + dTMP. It functions in the pathway pyrimidine metabolism; dTTP biosynthesis. Catalyzes the reductive methylation of 2'-deoxyuridine-5'-monophosphate (dUMP) to 2'-deoxythymidine-5'-monophosphate (dTMP) while utilizing 5,10-methylenetetrahydrofolate (mTHF) as the methyl donor and reductant in the reaction, yielding dihydrofolate (DHF) as a by-product. This enzymatic reaction provides an intracellular de novo source of dTMP, an essential precursor for DNA biosynthesis. This chain is Thymidylate synthase, found in Rhodopseudomonas palustris (strain HaA2).